The following is a 263-amino-acid chain: MVSMRDLLECGVHFGHQTRRWNPKMKKFIFGERKGIYVIDLQKTLRYFRYTYNIVRDAAAEGKTILFVGTKKQAGGAIKEYAEKCGMPYVNHRWLGGMMTNFGTIRQSIRKLEVIEKMEEDGSIKLLTKKEALMLTRKKEKLLAYLGGIRYMKTQPDMIFVIDTVKEKIAVQEANRLRIPVVAPLDTNCDPDLVTYPIPGNDDAIRSVQLFCQEMAEAINEGKALREQDGEALANEEKEITDEEKKEVLDEAMSEEDFGEEQE.

Positions 223–249 (KALREQDGEALANEEKEITDEEKKEVL) are enriched in basic and acidic residues. Positions 223-263 (KALREQDGEALANEEKEITDEEKKEVLDEAMSEEDFGEEQE) are disordered. The segment covering 250–263 (DEAMSEEDFGEEQE) has biased composition (acidic residues).

This sequence belongs to the universal ribosomal protein uS2 family.

The sequence is that of Small ribosomal subunit protein uS2 from Campylobacter jejuni subsp. jejuni serotype O:6 (strain 81116 / NCTC 11828).